The primary structure comprises 24 residues: Snake venom metalloproteinase Batx-1 (24 aa).

Residues 1–24 enclose the Peptidase M12B domain; it reads YIELAVVADHGIFTKYNSNLNTIR. Glutamate 3 serves as a coordination point for Ca(2+).

Belongs to the venom metalloproteinase (M12B) family. P-I subfamily. Monomer. Zn(2+) is required as a cofactor. Post-translationally, the N-terminus is blocked. Contains 3 disulfide bonds. Expressed by the venom gland.

It localises to the secreted. With respect to regulation, inhibited by EDTA, and o-phenanthroline, but not inhibited by PMSF, pepstatin A, and aprotinin. In terms of biological role, zinc metalloproteinase that exhits a weak hemorrhagic activity. Degrades preferentially the Aalpha- (FGA) and Bbeta-chains (FGB) of fibrinogen, and partially degrades gamma-chain (FGG) at higher concentration. Induces a mild myotoxicity, but lacks coagulant activity on human plasma or bovin fibrinogen and defibrinating activity. The polypeptide is Snake venom metalloproteinase Batx-1 (Bothrops atrox (Barba amarilla)).